A 236-amino-acid polypeptide reads, in one-letter code: 4-hydroxy-tetrahydrodipicolinate reductase (236 aa).

NAD(+) contacts are provided by residues 11-16 (GASGRM), 92-94 (GTT), and 116-119 (GSNF). Residue His-148 is the Proton donor/acceptor of the active site. Residue His-149 participates in (S)-2,3,4,5-tetrahydrodipicolinate binding. Lys-152 acts as the Proton donor in catalysis. 158–159 (GS) is a binding site for (S)-2,3,4,5-tetrahydrodipicolinate.

This sequence belongs to the DapB family.

The protein localises to the cytoplasm. It catalyses the reaction (S)-2,3,4,5-tetrahydrodipicolinate + NAD(+) + H2O = (2S,4S)-4-hydroxy-2,3,4,5-tetrahydrodipicolinate + NADH + H(+). The catalysed reaction is (S)-2,3,4,5-tetrahydrodipicolinate + NADP(+) + H2O = (2S,4S)-4-hydroxy-2,3,4,5-tetrahydrodipicolinate + NADPH + H(+). It functions in the pathway amino-acid biosynthesis; L-lysine biosynthesis via DAP pathway; (S)-tetrahydrodipicolinate from L-aspartate: step 4/4. Its function is as follows. Catalyzes the conversion of 4-hydroxy-tetrahydrodipicolinate (HTPA) to tetrahydrodipicolinate. The chain is 4-hydroxy-tetrahydrodipicolinate reductase from Xylella fastidiosa (strain M23).